The sequence spans 793 residues: Calcium permeable stress-gated cation channel 1 (793 aa).

Over 1-21 (MAFNGYGIFDSDPRKNPSSDL) the chain is Lumenal. The helical transmembrane segment at 22 to 42 (RTQFWLAFLLGASACVFFCFF) threads the bilayer. Residues 43-95 (RKRWKVLYAPRTTIEGLNLPTLSSSYYKWLMDLVNIPDDVVQNCAGLDGYVFL) lie on the Cytoplasmic side of the membrane. Residues 96–116 (LFFKMGIKFLSFASLLGVLII) form a helical membrane-spanning segment. The Lumenal portion of the chain corresponds to 117 to 192 (MPVNKHFRGD…IPGLPQPGDG (76 aa)). Residues 193-213 (FLYLYVLFTYFISIFLLYVLF) traverse the membrane as a helical segment. Residues 214–444 (SSTKSIADIR…HKFFQGWFIT (231 aa)) are Cytoplasmic-facing. A helical transmembrane segment spans residues 445–465 (LVTFMIILLWTVPVGAIAVFI). Residues 466–493 (NLDTIRRLWPELGRMIEDLPFLNSLLRT) are Lumenal-facing. A helical transmembrane segment spans residues 494–514 (FLPTLVYSLFISISPFLFRWL). At 515 to 534 (SSMQGLSSRAEEEIYAVGKN) the chain is on the cytoplasmic side. The helical transmembrane segment at 535–555 (YAYLFVNFFLVYVIAGSTSIW) threads the bilayer. At 556–577 (ELAKDTTSFAHFLANRLPHQAQ) the chain is on the lumenal side. Residues 578–598 (FFIDLIVLQGIGMFPLKLIQL) traverse the membrane as a helical segment. Residues 599–646 (GKLSSYFVRRSFVPYSIASKKFETPDSFSVGIFLPQPMFIMLICLCYS) are Cytoplasmic-facing. The helical transmembrane segment at 647–667 (IISPLILVFGLIYFIIGFLVY) threads the bilayer. The Lumenal segment spans residues 668-687 (KYELIYQMEHPQHSTGELWS). A helical transmembrane segment spans residues 688–708 (TIFLRMIFGCVIMQLTMMGLM). Residues 709–713 (SLRKA) lie on the Cytoplasmic side of the membrane. The helical transmembrane segment at 714 to 734 (YWLSTVIFPLLCFTVISAYNF) threads the bilayer. Residues 735–793 (STMIRSSMQFVSLYYIRTHQSNTLSSESESRNSESSGSYVHPGFDLSNEELPLIDLNTA) are Lumenal-facing. Residues 759–778 (SSESESRNSESSGSYVHPGF) form a disordered region.

Belongs to the CSC1 (TC 1.A.17) family.

The protein localises to the vacuole membrane. Functionally, acts as an osmosensitive calcium-permeable cation channel. This Schizosaccharomyces pombe (strain 972 / ATCC 24843) (Fission yeast) protein is Calcium permeable stress-gated cation channel 1.